The following is a 116-amino-acid chain: Phosphoribosyl-AMP cyclohydrolase (116 aa).

Aspartate 80 contributes to the Mg(2+) binding site. Position 81 (cysteine 81) interacts with Zn(2+). 2 residues coordinate Mg(2+): aspartate 82 and aspartate 84. The Zn(2+) site is built by cysteine 98 and cysteine 105.

Belongs to the PRA-CH family. In terms of assembly, homodimer. It depends on Mg(2+) as a cofactor. Zn(2+) serves as cofactor.

The protein localises to the cytoplasm. It carries out the reaction 1-(5-phospho-beta-D-ribosyl)-5'-AMP + H2O = 1-(5-phospho-beta-D-ribosyl)-5-[(5-phospho-beta-D-ribosylamino)methylideneamino]imidazole-4-carboxamide. It participates in amino-acid biosynthesis; L-histidine biosynthesis; L-histidine from 5-phospho-alpha-D-ribose 1-diphosphate: step 3/9. Functionally, catalyzes the hydrolysis of the adenine ring of phosphoribosyl-AMP. The sequence is that of Phosphoribosyl-AMP cyclohydrolase from Trichormus variabilis (strain ATCC 29413 / PCC 7937) (Anabaena variabilis).